Here is a 125-residue protein sequence, read N- to C-terminus: Histone H2A (125 aa).

Residues 1-18 show a composition bias toward basic residues; it reads MSGRGKGGKAKAKAKSRS. The tract at residues 1-21 is disordered; that stretch reads MSGRGKGGKAKAKAKSRSSRA. At S2 the chain carries N-acetylserine. Q104 bears the N5-methylglutamine mark.

Belongs to the histone H2A family. In terms of assembly, the nucleosome is a histone octamer containing two molecules each of H2A, H2B, H3 and H4 assembled in one H3-H4 heterotetramer and two H2A-H2B heterodimers. The octamer wraps approximately 147 bp of DNA.

It is found in the nucleus. The protein localises to the chromosome. Functionally, core component of nucleosome. Nucleosomes wrap and compact DNA into chromatin, limiting DNA accessibility to the cellular machineries which require DNA as a template. Histones thereby play a central role in transcription regulation, DNA repair, DNA replication and chromosomal stability. DNA accessibility is regulated via a complex set of post-translational modifications of histones, also called histone code, and nucleosome remodeling. In Mytilus trossulus (Blue mussel), this protein is Histone H2A.